We begin with the raw amino-acid sequence, 333 residues long: Lipoyl synthase (333 aa).

Residues Met1–Gln15 are compositionally biased toward polar residues. The disordered stretch occupies residues Met1–Thr34. The [4Fe-4S] cluster site is built by Cys80, Cys85, Cys91, Cys106, Cys110, Cys113, and Ser320. Positions Cys91 to Thr309 constitute a Radical SAM core domain.

Belongs to the radical SAM superfamily. Lipoyl synthase family. [4Fe-4S] cluster is required as a cofactor.

Its subcellular location is the cytoplasm. The catalysed reaction is [[Fe-S] cluster scaffold protein carrying a second [4Fe-4S](2+) cluster] + N(6)-octanoyl-L-lysyl-[protein] + 2 oxidized [2Fe-2S]-[ferredoxin] + 2 S-adenosyl-L-methionine + 4 H(+) = [[Fe-S] cluster scaffold protein] + N(6)-[(R)-dihydrolipoyl]-L-lysyl-[protein] + 4 Fe(3+) + 2 hydrogen sulfide + 2 5'-deoxyadenosine + 2 L-methionine + 2 reduced [2Fe-2S]-[ferredoxin]. It functions in the pathway protein modification; protein lipoylation via endogenous pathway; protein N(6)-(lipoyl)lysine from octanoyl-[acyl-carrier-protein]: step 2/2. Functionally, catalyzes the radical-mediated insertion of two sulfur atoms into the C-6 and C-8 positions of the octanoyl moiety bound to the lipoyl domains of lipoate-dependent enzymes, thereby converting the octanoylated domains into lipoylated derivatives. The protein is Lipoyl synthase of Bordetella parapertussis (strain 12822 / ATCC BAA-587 / NCTC 13253).